The primary structure comprises 98 residues: Large ribosomal subunit protein eL21 (98 aa).

Residues 1–17 (MQRSRGFRSKSRRKMTK) show a composition bias toward basic residues. Residues 1–28 (MQRSRGFRSKSRRKMTKVVREGRSNPIT) form a disordered region.

It belongs to the eukaryotic ribosomal protein eL21 family.

This Methanobrevibacter smithii (strain ATCC 35061 / DSM 861 / OCM 144 / PS) protein is Large ribosomal subunit protein eL21.